Reading from the N-terminus, the 215-residue chain is Phosphatidylserine decarboxylase proenzyme (215 aa).

Ser-184 serves as the catalytic Schiff-base intermediate with substrate; via pyruvic acid. Ser-184 bears the Pyruvic acid (Ser); by autocatalysis mark.

It belongs to the phosphatidylserine decarboxylase family. PSD-A subfamily. As to quaternary structure, heterodimer of a large membrane-associated beta subunit and a small pyruvoyl-containing alpha subunit. Pyruvate serves as cofactor. Is synthesized initially as an inactive proenzyme. Formation of the active enzyme involves a self-maturation process in which the active site pyruvoyl group is generated from an internal serine residue via an autocatalytic post-translational modification. Two non-identical subunits are generated from the proenzyme in this reaction, and the pyruvate is formed at the N-terminus of the alpha chain, which is derived from the carboxyl end of the proenzyme. The post-translation cleavage follows an unusual pathway, termed non-hydrolytic serinolysis, in which the side chain hydroxyl group of the serine supplies its oxygen atom to form the C-terminus of the beta chain, while the remainder of the serine residue undergoes an oxidative deamination to produce ammonia and the pyruvoyl prosthetic group on the alpha chain.

The protein localises to the cell membrane. The catalysed reaction is a 1,2-diacyl-sn-glycero-3-phospho-L-serine + H(+) = a 1,2-diacyl-sn-glycero-3-phosphoethanolamine + CO2. Its pathway is phospholipid metabolism; phosphatidylethanolamine biosynthesis; phosphatidylethanolamine from CDP-diacylglycerol: step 2/2. Functionally, catalyzes the formation of phosphatidylethanolamine (PtdEtn) from phosphatidylserine (PtdSer). The chain is Phosphatidylserine decarboxylase proenzyme from Aromatoleum aromaticum (strain DSM 19018 / LMG 30748 / EbN1) (Azoarcus sp. (strain EbN1)).